A 468-amino-acid polypeptide reads, in one-letter code: Secreted triacylglycerol lipase LIP7 (468 aa).

Positions 1-21 (MFPRQILVFAALGLCFALVAG) are cleaved as a signal peptide. A disulfide bridge links Cys-125 with Cys-295. Catalysis depends on Ser-209, which acts as the Nucleophile. Residues Asp-355 and His-389 contribute to the active site.

This sequence belongs to the AB hydrolase superfamily. Lipase family. Class Lip subfamily.

The protein resides in the secreted. It localises to the cell wall. The catalysed reaction is a triacylglycerol + H2O = a diacylglycerol + a fatty acid + H(+). It catalyses the reaction a monoacylglycerol + H2O = glycerol + a fatty acid + H(+). It carries out the reaction a diacylglycerol + H2O = a monoacylglycerol + a fatty acid + H(+). Secreted lipase involved in Dandruff and seborrheic dermatitis (D/SD) probably via lipase-mediated breakdown of sebaceous lipids and release of irritating free fatty acids. Has triacylglycerol lipase activity and is able to hydrolyze triolein. Mostly converts monoolein to di- and triolein, while free fatty acids are only produced in low amounts. This Malassezia globosa (strain ATCC MYA-4612 / CBS 7966) (Dandruff-associated fungus) protein is Secreted triacylglycerol lipase LIP7.